We begin with the raw amino-acid sequence, 520 residues long: Aspartate-proton symporter (520 aa).

A run of 14 helical transmembrane segments spans residues 13–33, 49–69, 85–105, 130–150, 161–181, 201–221, 232–252, 281–301, 345–365, 366–386, 402–422, 425–445, 460–480, and 482–502; these read LFDL…LFAV, ILGG…GAAL, HLVG…LISI, TISG…LNYW, IISI…IFHF, AAIS…IVSV, IPIA…VLQV, IAVM…AILS, WLSF…NALV, NVCS…SAAL, MSII…WSGW, VSWL…FSKY, AWWL…GSFG, and GLGI…SLAI.

It belongs to the amino acid-polyamine-organocation (APC) superfamily. AGT (TC 2.A.3.11) family.

The protein resides in the cell membrane. Its function is as follows. Uptake of L-aspartate with the concomitant import of a proton. Can also transport aspartate hydroxamate and L-glutamate with lower affinity and efficiency. This is Aspartate-proton symporter (yveA) from Bacillus subtilis (strain 168).